Consider the following 455-residue polypeptide: Phosphoglucosamine/phosphogalactosamine mutase (455 aa).

The active-site Phosphoserine intermediate is the S97. Mg(2+) is bound by residues S97, D241, D243, and D245. S97 bears the Phosphoserine mark.

Belongs to the phosphohexose mutase family. It depends on Mg(2+) as a cofactor. In terms of processing, activated by phosphorylation.

The enzyme catalyses alpha-D-glucosamine 1-phosphate = D-glucosamine 6-phosphate. It carries out the reaction D-galactosamine 6-phosphate = alpha-D-galactosamine 1-phosphate. In terms of biological role, involved in the synthesis of UDP-N-acetylglucosamine (UDP-GlcNAc) and UDP-N-acetylgalactosamine (UDP-GalNAc). Catalyzes the conversion of glucosamine-6-phosphate to glucosamine-1-phosphate and of galactosamine-6-phosphate to galactosamine-1-phosphate. The chain is Phosphoglucosamine/phosphogalactosamine mutase from Sulfurisphaera tokodaii (strain DSM 16993 / JCM 10545 / NBRC 100140 / 7) (Sulfolobus tokodaii).